Here is a 341-residue protein sequence, read N- to C-terminus: uncharacterized protein (341 aa).

WD repeat units lie at residues 19-59, 106-145, 252-293, and 303-341; these read SLGS…QVHT, GHTDIVSSIEVSPIEDQFVSTANDKTLKLWKMNQSSRCLG, PFSN…HHKG, and VSQSIINPGLVKYNPRYDQLLTAGSQLVFWLPEKYALTS.

It localises to the cytoplasm. Its subcellular location is the nucleus. This is an uncharacterized protein from Schizosaccharomyces pombe (strain 972 / ATCC 24843) (Fission yeast).